The following is a 654-amino-acid chain: Bifunctional 3'-phosphoadenosine 5'-phosphosulfate synthase pps-1 (654 aa).

A disordered region spans residues 1–26 (MLTPRDENNEGDAMPMLKKPRYSSLS). The segment at 1 to 231 (MLTPRDENNE…VLDHLESKGL (231 aa)) is adenylyl-sulfate kinase. Residue 66 to 71 (GAGKTT) coordinates ATP. Adenosine 5'-phosphosulfate-binding positions include 93-96 (DNIR), F105, 110-113 (RQEN), 136-137 (IS), K175, and 190-191 (GF). ATP-binding positions include C218, 449-452 (QLRN), 550-554 (GRDPA), and A592. The tract at residues 242–653 (VRELFVSDDL…AGYYKSLQNS (412 aa)) is sulfate adenylyltransferase.

The protein in the N-terminal section; belongs to the APS kinase family. This sequence in the C-terminal section; belongs to the sulfate adenylyltransferase family.

The protein localises to the nucleus. The catalysed reaction is sulfate + ATP + H(+) = adenosine 5'-phosphosulfate + diphosphate. The enzyme catalyses adenosine 5'-phosphosulfate + ATP = 3'-phosphoadenylyl sulfate + ADP + H(+). The protein operates within sulfur metabolism; sulfate assimilation. In terms of biological role, bifunctional enzyme with both ATP sulfurylase and APS kinase activity, which mediates two steps in the sulfate activation pathway. The first step is the transfer of a sulfate group to ATP to yield adenosine 5'-phosphosulfate (APS), and the second step is the transfer of a phosphate group from ATP to APS yielding 3'-phosphoadenylylsulfate (PAPS: activated sulfate donor used by sulfotransferase). Required for normal growth and development. Involved in several aspects of both embryonic and postembryonic development, including molting, changes in cell shape, and patterning of epithelial and muscle cells. The chain is Bifunctional 3'-phosphoadenosine 5'-phosphosulfate synthase pps-1 from Caenorhabditis elegans.